We begin with the raw amino-acid sequence, 172 residues long: Adenine phosphoribosyltransferase (172 aa).

This sequence belongs to the purine/pyrimidine phosphoribosyltransferase family. Homodimer.

The protein resides in the cytoplasm. The enzyme catalyses AMP + diphosphate = 5-phospho-alpha-D-ribose 1-diphosphate + adenine. The protein operates within purine metabolism; AMP biosynthesis via salvage pathway; AMP from adenine: step 1/1. Its function is as follows. Catalyzes a salvage reaction resulting in the formation of AMP, that is energically less costly than de novo synthesis. The sequence is that of Adenine phosphoribosyltransferase from Latilactobacillus sakei subsp. sakei (strain 23K) (Lactobacillus sakei subsp. sakei).